The primary structure comprises 295 residues: uncharacterized protein (295 aa).

A signal peptide spans 1-19 (MFRKFLFIPLLIVTSLVKA). Positions 274-295 (KRNNPPLKNNNAKSKNSYETHK) are disordered. The segment covering 276 to 288 (NNPPLKNNNAKSK) has biased composition (low complexity).

This is an uncharacterized protein from Rickettsia typhi (strain ATCC VR-144 / Wilmington).